We begin with the raw amino-acid sequence, 492 residues long: Forkhead box protein O6 (492 aa).

Disordered regions lie at residues Met-1–Pro-76, Ser-163–Ala-235, Gly-315–Pro-338, and Phe-466–Gly-492. The segment at residues Trp-88–Ala-182 is a DNA-binding region (fork-head). Ser-184 carries the phosphoserine modification. Residues Leu-192–Gln-203 are compositionally biased toward basic residues. Low complexity predominate over residues Pro-225–Ala-235. A compositionally biased stretch (pro residues) spans Leu-472–Asn-486.

In terms of processing, phosphorylation of Ser-184 is be important in regulating the transacriptional activity.

The protein localises to the cytoplasm. It localises to the nucleus. In terms of biological role, transcriptional activator. This is Forkhead box protein O6 (FOXO6) from Homo sapiens (Human).